The following is a 258-amino-acid chain: MTLIHPTAVIDPKAELDSGVKVGAYTVIGPNVRIGANTEIGPHAVINGHTTIGENNRIFQFASLGEIPQDKKYRDEPTKLIIGNGNTIREFTTFNLGTVTGIGETRIGDDNWIMAYCHLAHDCVVGNHTIFANNASLAGHVTVGDYVVLGGYTLVFQFCRIGDYAMTAFAAGVHKDVPPYFMASGYRAEPAGLNSEGMRRNGFTAEQISAVKDVYKTLYHRGIPFEEAKADILRRAETQAELAVFQDFFAQSTRGIIR.

Belongs to the transferase hexapeptide repeat family. LpxA subfamily. As to quaternary structure, homotrimer.

The protein localises to the cytoplasm. The enzyme catalyses a (3R)-hydroxyacyl-[ACP] + UDP-N-acetyl-alpha-D-glucosamine = a UDP-3-O-[(3R)-3-hydroxyacyl]-N-acetyl-alpha-D-glucosamine + holo-[ACP]. The protein operates within glycolipid biosynthesis; lipid IV(A) biosynthesis; lipid IV(A) from (3R)-3-hydroxytetradecanoyl-[acyl-carrier-protein] and UDP-N-acetyl-alpha-D-glucosamine: step 1/6. Involved in the biosynthesis of lipid A, a phosphorylated glycolipid that anchors the lipopolysaccharide to the outer membrane of the cell. This chain is Acyl-[acyl-carrier-protein]--UDP-N-acetylglucosamine O-acyltransferase, found in Neisseria gonorrhoeae (strain ATCC 700825 / FA 1090).